A 76-amino-acid chain; its full sequence is UPF0291 protein BPUM_1689 (76 aa).

2 disordered regions span residues 1–31 and 56–76; these read MISK…TEQK and DPEG…QNLH. 2 stretches are compositionally biased toward basic and acidic residues: residues 12-31 and 63-76; these read ELSK…TEQK and TPEK…QNLH.

Belongs to the UPF0291 family.

Its subcellular location is the cytoplasm. The protein is UPF0291 protein BPUM_1689 of Bacillus pumilus (strain SAFR-032).